We begin with the raw amino-acid sequence, 290 residues long: Poly-beta-1,6-N-acetyl-D-glucosamine N-deacetylase (290 aa).

The N-terminal stretch at 1-28 (MKYRKLIILVLSILIILPVSTLDGHHIA) is a signal peptide. Residues 114 to 290 (RSVWINFDDM…KRWDGFHEKD (177 aa)) form the NodB homology domain.

This sequence belongs to the polysaccharide deacetylase family.

The protein localises to the secreted. Its subcellular location is the cell wall. Functionally, catalyzes the N-deacetylation of poly-beta-1,6-N-acetyl-D-glucosamine (PNAG, also referred to as PIA), a biofilm adhesin polysaccharide. N-deacetylation is crucial for attachment of the polysaccharide to the bacterial cell surface; it leads to the introduction of positive charges in the otherwise neutral PIA polymer, allowing electrostatic interactions. The polypeptide is Poly-beta-1,6-N-acetyl-D-glucosamine N-deacetylase (icaB) (Staphylococcus aureus (strain Mu50 / ATCC 700699)).